The chain runs to 353 residues: N-acetyl-gamma-glutamyl-phosphate reductase (353 aa).

Residue C155 is part of the active site.

The protein belongs to the NAGSA dehydrogenase family. Type 1 subfamily.

The protein localises to the cytoplasm. The enzyme catalyses N-acetyl-L-glutamate 5-semialdehyde + phosphate + NADP(+) = N-acetyl-L-glutamyl 5-phosphate + NADPH + H(+). The protein operates within amino-acid biosynthesis; L-arginine biosynthesis; N(2)-acetyl-L-ornithine from L-glutamate: step 3/4. Functionally, catalyzes the NADPH-dependent reduction of N-acetyl-5-glutamyl phosphate to yield N-acetyl-L-glutamate 5-semialdehyde. This is N-acetyl-gamma-glutamyl-phosphate reductase from Microcystis aeruginosa (strain NIES-843 / IAM M-2473).